Consider the following 325-residue polypeptide: Probable pectate lyase B (325 aa).

Positions 1–15 (MRLPTLFMLAAIATA) are cleaved as a signal peptide. Asp-132, Asp-161, and Asp-165 together coordinate Ca(2+). Residue Arg-218 is part of the active site.

The protein belongs to the polysaccharide lyase 1 family. Ca(2+) is required as a cofactor.

The protein localises to the secreted. It catalyses the reaction Eliminative cleavage of (1-&gt;4)-alpha-D-galacturonan to give oligosaccharides with 4-deoxy-alpha-D-galact-4-enuronosyl groups at their non-reducing ends.. Its function is as follows. Pectinolytic enzyme consist of four classes of enzymes: pectin lyase, polygalacturonase, pectin methylesterase and rhamnogalacturonase. Among pectinolytic enzymes, pectin lyase is the most important in depolymerization of pectin, since it cleaves internal glycosidic bonds of highly methylated pectins. Favors pectate, the anion, over pectin, the methyl ester. This chain is Probable pectate lyase B (plyB), found in Aspergillus terreus (strain NIH 2624 / FGSC A1156).